Reading from the N-terminus, the 692-residue chain is Elongation factor G (692 aa).

A tr-type G domain is found at 8–282 (EKTRNIGIMA…AIVDYLPAPT (275 aa)). Residues 17 to 24 (AHIDAGKT), 81 to 85 (DTPGH), and 135 to 138 (NKMD) each bind GTP.

The protein belongs to the TRAFAC class translation factor GTPase superfamily. Classic translation factor GTPase family. EF-G/EF-2 subfamily.

It is found in the cytoplasm. Catalyzes the GTP-dependent ribosomal translocation step during translation elongation. During this step, the ribosome changes from the pre-translocational (PRE) to the post-translocational (POST) state as the newly formed A-site-bound peptidyl-tRNA and P-site-bound deacylated tRNA move to the P and E sites, respectively. Catalyzes the coordinated movement of the two tRNA molecules, the mRNA and conformational changes in the ribosome. The protein is Elongation factor G of Pelotomaculum thermopropionicum (strain DSM 13744 / JCM 10971 / SI).